An 833-amino-acid polypeptide reads, in one-letter code: CUB domain-containing protein 1 (833 aa).

An N-terminal signal peptide occupies residues 1 to 29; that stretch reads MAHSACGFSVALLGALLLGTARLLRGTEA. Over 30 to 666 the chain is Extracellular; sequence SEIALPQRSG…VTLTPRTVDL (637 aa). Residues Asn-122, Asn-180, Asn-205, Asn-270, Asn-310, Asn-342, and Asn-386 are each glycosylated (N-linked (GlcNAc...) asparagine). One can recognise a CUB domain in the interval 417–540; the sequence is CLDHRYCYRQ…QGLIVSYTPY (124 aa). Cys-476 and Cys-499 are disulfide-bonded. A helical transmembrane segment spans residues 667–687; sequence AVVIGAAGGGALLLFALVLII. Residues 688 to 833 lie on the Cytoplasmic side of the membrane; that stretch reads CFVKKKKKVD…HTQGPVETEE (146 aa). Tyr-731 bears the Phosphotyrosine mark. The tract at residues 783-833 is disordered; it reads AKFTAEELAPSSPPESESEPYTFSHPNKGEIGVRETDIPLLHTQGPVETEE. Residues 809–819 are compositionally biased toward basic and acidic residues; sequence NKGEIGVRETD.

As to quaternary structure, interacts with CDH2/N-cadherin, CDH3/P-cadherin, SDC1/syndecan-1, SDC4/syndecan-4 and the serine protease ST14/MT-SP1. Also interacts SRC and PRKCG/protein kinase C gamma. Phosphorylated on tyrosine by kinases of the SRC family such as SRC and YES as well as by the protein kinase C gamma/PRKCG. Dephosphorylated by phosphotyrosine phosphatases. Also phosphorylated by suramin, a heparin analog. Tyrosine phosphorylated in response to dissociation of integrin alpha-6 beta-4 from laminin-5. Post-translationally, N-glycosylated. In terms of processing, a soluble form may also be produced by proteolytic cleavage at the cell surface (shedding). Another peptide of 80 kDa (p80) is present in cultured keratinocytes probably due to tryptic cleavage at an unidentified site on the N-terminal side. Converted to p80 by plasmin, a trypsin-like protease.

The protein localises to the cell membrane. In terms of biological role, may be involved in cell adhesion and cell matrix association. May play a role in the regulation of anchorage versus migration or proliferation versus differentiation via its phosphorylation. May be a novel marker for leukemia diagnosis and for immature hematopoietic stem cell subsets. Belongs to the tetraspanin web involved in tumor progression and metastasis. This is CUB domain-containing protein 1 (Cdcp1) from Mus musculus (Mouse).